Reading from the N-terminus, the 143-residue chain is Large ribosomal subunit protein uL16 (143 aa).

Residues 1–26 (MSMALLPRRVKYRKSQRGSRKGNATR) are disordered. Positions 8–20 (RRVKYRKSQRGSR) are enriched in basic residues.

It belongs to the universal ribosomal protein uL16 family. As to quaternary structure, part of the 50S ribosomal subunit.

Functionally, binds 23S rRNA and is also seen to make contacts with the A and possibly P site tRNAs. This chain is Large ribosomal subunit protein uL16, found in Methylacidiphilum infernorum (isolate V4) (Methylokorus infernorum (strain V4)).